Here is a 640-residue protein sequence, read N- to C-terminus: 5-aminolevulinate synthase, non-specific, mitochondrial (640 aa).

The N-terminal 56 residues, 1–56 (METVVRSCPFLSRVPQAFLQKAGKSLLFYAQNCPKMMEVGAKPAPRALSTAAVHYQ), are a transit peptide targeting the mitochondrion. Disordered stretches follow at residues 60-103 (ETPP…TSQG) and 143-163 (EVAE…GGDP). Over residues 75–92 (VQQTPDGSQQSPDGTQLP) the composition is skewed to polar residues. Residues Arg-217, Ser-334, and Lys-353 each coordinate substrate. Pyridoxal 5'-phosphate contacts are provided by Ser-386, His-414, and Thr-442. Lys-445 is an active-site residue. Lys-445 bears the N6-(pyridoxal phosphate)lysine mark. Thr-474 and Thr-475 together coordinate pyridoxal 5'-phosphate. Position 562 (Thr-562) interacts with substrate. Pro-576 carries the hydroxyproline modification.

This sequence belongs to the class-II pyridoxal-phosphate-dependent aminotransferase family. Homodimer. Interacts (hydroxylated form) with VHL. Requires pyridoxal 5'-phosphate as cofactor. In normoxia, is hydroxylated at Pro-576, promoting interaction with VHL, initiating ubiquitination and subsequent degradation via the proteasome. In terms of processing, ubiquitinated; in normoxia following hydroxylation and interaction with VHL, leading to its subsequent degradation via the proteasome.

It localises to the mitochondrion inner membrane. It carries out the reaction succinyl-CoA + glycine + H(+) = 5-aminolevulinate + CO2 + CoA. It functions in the pathway porphyrin-containing compound metabolism; protoporphyrin-IX biosynthesis; 5-aminolevulinate from glycine: step 1/1. In terms of biological role, catalyzes the pyridoxal 5'-phosphate (PLP)-dependent condensation of succinyl-CoA and glycine to form aminolevulinic acid (ALA), with CoA and CO2 as by-products. The protein is 5-aminolevulinate synthase, non-specific, mitochondrial (ALAS1) of Pongo abelii (Sumatran orangutan).